We begin with the raw amino-acid sequence, 301 residues long: Probable alpha-L-glutamate ligase (301 aa).

Positions 104 to 287 constitute an ATP-grasp domain; it reads LQLLARKGIG…VAGQLIDYIE (184 aa). Residues Lys141, 178–179, Asp187, and 211–213 contribute to the ATP site; these read EF and RSN. Mg(2+) contacts are provided by Asp248, Glu260, and Asn262. Residues Asp248, Glu260, and Asn262 each coordinate Mn(2+).

It belongs to the RimK family. Mg(2+) serves as cofactor. Requires Mn(2+) as cofactor.

The sequence is that of Probable alpha-L-glutamate ligase from Maridesulfovibrio salexigens (strain ATCC 14822 / DSM 2638 / NCIMB 8403 / VKM B-1763) (Desulfovibrio salexigens).